The following is a 383-amino-acid chain: Succinyl-diaminopimelate desuccinylase (383 aa).

H73 contacts Zn(2+). D75 is a catalytic residue. D107 contributes to the Zn(2+) binding site. The active-site Proton acceptor is E141. The Zn(2+) site is built by E142, E170, and H356.

The protein belongs to the peptidase M20A family. DapE subfamily. Homodimer. Zn(2+) serves as cofactor. Requires Co(2+) as cofactor.

The enzyme catalyses N-succinyl-(2S,6S)-2,6-diaminopimelate + H2O = (2S,6S)-2,6-diaminopimelate + succinate. The protein operates within amino-acid biosynthesis; L-lysine biosynthesis via DAP pathway; LL-2,6-diaminopimelate from (S)-tetrahydrodipicolinate (succinylase route): step 3/3. Its function is as follows. Catalyzes the hydrolysis of N-succinyl-L,L-diaminopimelic acid (SDAP), forming succinate and LL-2,6-diaminopimelate (DAP), an intermediate involved in the bacterial biosynthesis of lysine and meso-diaminopimelic acid, an essential component of bacterial cell walls. In Pseudomonas putida (strain GB-1), this protein is Succinyl-diaminopimelate desuccinylase.